The sequence spans 88 residues: Beta-insect excitatory toxin 1 (88 aa).

The signal sequence occupies residues 1–18 (MKFLLLFLVVLPIMGVFG). The 64-residue stretch at 20–83 (KNGYAVDSSG…ISDTRKSYCD (64 aa)) folds into the LCN-type CS-alpha/beta domain. Intrachain disulfides connect Cys-34/Cys-55, Cys-40/Cys-60, Cys-44/Cys-62, and Cys-56/Cys-82.

Belongs to the long (4 C-C) scorpion toxin superfamily. Sodium channel inhibitor family. Beta subfamily. As to expression, expressed by the venom gland.

The protein localises to the secreted. In terms of biological role, excitatory insect beta-toxins induce a spastic paralysis. They bind voltage-independently at site-4 of sodium channels (Nav) and shift the voltage of activation toward more negative potentials thereby affecting sodium channel activation and promoting spontaneous and repetitive firing. This toxin is active only on insects. The protein is Beta-insect excitatory toxin 1 of Androctonus australis (Sahara scorpion).